Consider the following 393-residue polypeptide: Acetylornithine aminotransferase 1 (393 aa).

N(2)-acetyl-L-ornithine is bound at residue R131. Pyridoxal 5'-phosphate is bound at residue 215 to 218 (DEVQ). N6-(pyridoxal phosphate)lysine is present on K244. T272 lines the N(2)-acetyl-L-ornithine pocket. T273 contacts pyridoxal 5'-phosphate.

Belongs to the class-III pyridoxal-phosphate-dependent aminotransferase family. ArgD subfamily. As to quaternary structure, homodimer. Pyridoxal 5'-phosphate serves as cofactor.

It localises to the cytoplasm. The catalysed reaction is N(2)-acetyl-L-ornithine + 2-oxoglutarate = N-acetyl-L-glutamate 5-semialdehyde + L-glutamate. It functions in the pathway amino-acid biosynthesis; L-arginine biosynthesis; N(2)-acetyl-L-ornithine from L-glutamate: step 4/4. This Bordetella pertussis (strain Tohama I / ATCC BAA-589 / NCTC 13251) protein is Acetylornithine aminotransferase 1.